We begin with the raw amino-acid sequence, 60 residues long: Cytotoxin 3 (60 aa).

4 disulfide bridges follow: Cys-3-Cys-21, Cys-14-Cys-38, Cys-42-Cys-53, and Cys-54-Cys-59.

The protein belongs to the three-finger toxin family. Short-chain subfamily. Type IA cytotoxin sub-subfamily. In terms of assembly, monomer in solution; Homodimer and oligomer in the presence of negatively charged lipids forming a pore with a size ranging between 20 and 30 Angstroms. Expressed by the venom gland.

It localises to the secreted. The protein resides in the target cell membrane. Shows cytolytic activity on many different cells by forming pore in lipid membranes. In vivo, increases heart rate or kills the animal by cardiac arrest. In addition, it binds to heparin with high affinity, interacts with Kv channel-interacting protein 1 (KCNIP1) in a calcium-independent manner, and binds to integrin alpha-V/beta-3 (ITGAV/ITGB3) with moderate affinity. The chain is Cytotoxin 3 from Naja annulifera (Banded Egyptian cobra).